The sequence spans 119 residues: uncharacterized protein (119 aa).

Residues 6-36 (QAYLDIQGKIAEFRREIKALRVEEKAITANL) adopt a coiled-coil conformation. The tract at residues 95-119 (AVTGSSSNVKIRKSAPARNEEDDDG) is disordered.

This is an uncharacterized protein from Frog virus 3 (isolate Goorha) (FV-3).